The sequence spans 144 residues: Large ribosomal subunit protein uL13 (144 aa).

This sequence belongs to the universal ribosomal protein uL13 family. Part of the 50S ribosomal subunit.

In terms of biological role, this protein is one of the early assembly proteins of the 50S ribosomal subunit, although it is not seen to bind rRNA by itself. It is important during the early stages of 50S assembly. The chain is Large ribosomal subunit protein uL13 from Lachnoclostridium phytofermentans (strain ATCC 700394 / DSM 18823 / ISDg) (Clostridium phytofermentans).